The primary structure comprises 226 residues: Urease accessory protein UreF (226 aa).

It belongs to the UreF family. As to quaternary structure, ureD, UreF and UreG form a complex that acts as a GTP-hydrolysis-dependent molecular chaperone, activating the urease apoprotein by helping to assemble the nickel containing metallocenter of UreC. The UreE protein probably delivers the nickel.

The protein localises to the cytoplasm. In terms of biological role, required for maturation of urease via the functional incorporation of the urease nickel metallocenter. This is Urease accessory protein UreF from Paraburkholderia xenovorans (strain LB400).